The chain runs to 444 residues: Tol-Pal system protein TolB (444 aa).

Residues 1-26 (MTLFRTLAPMGLALALLLPAAVPAAA) form the signal peptide. A compositionally biased stretch (polar residues) spans 281 to 310 (IYTLDTGSGTRRQLTNSPSIETAPSYSPDG). A disordered region spans residues 281–311 (IYTLDTGSGTRRQLTNSPSIETAPSYSPDGS).

This sequence belongs to the TolB family. In terms of assembly, the Tol-Pal system is composed of five core proteins: the inner membrane proteins TolA, TolQ and TolR, the periplasmic protein TolB and the outer membrane protein Pal. They form a network linking the inner and outer membranes and the peptidoglycan layer.

Its subcellular location is the periplasm. Its function is as follows. Part of the Tol-Pal system, which plays a role in outer membrane invagination during cell division and is important for maintaining outer membrane integrity. This chain is Tol-Pal system protein TolB, found in Cereibacter sphaeroides (strain ATCC 17029 / ATH 2.4.9) (Rhodobacter sphaeroides).